The primary structure comprises 198 residues: V-type ATP synthase subunit E (198 aa).

It belongs to the V-ATPase E subunit family.

Functionally, produces ATP from ADP in the presence of a proton gradient across the membrane. The chain is V-type ATP synthase subunit E from Clostridium novyi (strain NT).